The sequence spans 411 residues: Adenylosuccinate synthetase (411 aa).

Residues 11–17 (GDEGKGK) and 39–41 (GHT) contribute to the GTP site. D12 acts as the Proton acceptor in catalysis. Mg(2+) is bound by residues D12 and G39. IMP is bound by residues 12 to 15 (DEGK), 37 to 40 (NAGH), T121, R135, Q215, T230, and R294. The active-site Proton donor is the H40. 290-296 (TTTKRPR) lines the substrate pocket. Residues R296, 322 to 324 (KLD), and 400 to 402 (STS) each bind GTP.

This sequence belongs to the adenylosuccinate synthetase family. In terms of assembly, homodimer. It depends on Mg(2+) as a cofactor.

The protein localises to the cytoplasm. It catalyses the reaction IMP + L-aspartate + GTP = N(6)-(1,2-dicarboxyethyl)-AMP + GDP + phosphate + 2 H(+). Its pathway is purine metabolism; AMP biosynthesis via de novo pathway; AMP from IMP: step 1/2. In terms of biological role, plays an important role in the de novo pathway of purine nucleotide biosynthesis. Catalyzes the first committed step in the biosynthesis of AMP from IMP. This Helicobacter acinonychis (strain Sheeba) protein is Adenylosuccinate synthetase.